Reading from the N-terminus, the 554-residue chain is Glucose-6-phosphate isomerase (554 aa).

The active-site Proton donor is E358. Residues H389 and K515 contribute to the active site.

The protein belongs to the GPI family.

The protein resides in the cytoplasm. It carries out the reaction alpha-D-glucose 6-phosphate = beta-D-fructose 6-phosphate. Its pathway is carbohydrate biosynthesis; gluconeogenesis. It functions in the pathway carbohydrate degradation; glycolysis; D-glyceraldehyde 3-phosphate and glycerone phosphate from D-glucose: step 2/4. Functionally, catalyzes the reversible isomerization of glucose-6-phosphate to fructose-6-phosphate. In Mycobacterium leprae (strain Br4923), this protein is Glucose-6-phosphate isomerase.